Reading from the N-terminus, the 506-residue chain is GMP synthase [glutamine-hydrolyzing] (506 aa).

Residues 4–192 form the Glutamine amidotransferase type-1 domain; it reads KLIILDFGSQ…FLDICGMKRD (189 aa). The active-site Nucleophile is cysteine 79. Residues histidine 167 and glutamate 169 contribute to the active site. In terms of domain architecture, GMPS ATP-PPase spans 193–381; it reads WTPASFIEAT…LGMMPHLIHR (189 aa). 220 to 226 lines the ATP pocket; that stretch reads SGGVDSS.

As to quaternary structure, homodimer.

It carries out the reaction XMP + L-glutamine + ATP + H2O = GMP + L-glutamate + AMP + diphosphate + 2 H(+). The protein operates within purine metabolism; GMP biosynthesis; GMP from XMP (L-Gln route): step 1/1. Catalyzes the synthesis of GMP from XMP. The chain is GMP synthase [glutamine-hydrolyzing] from Porphyromonas gingivalis (strain ATCC 33277 / DSM 20709 / CIP 103683 / JCM 12257 / NCTC 11834 / 2561).